The chain runs to 942 residues: Lambda-carrageenase (942 aa).

The first 25 residues, 1–25, serve as a signal peptide directing secretion; the sequence is MKIKILSAMIASSLLIGCVIPTVKA.

Monomer.

The protein resides in the secreted. The enzyme catalyses Endohydrolysis of (1-&gt;4)-beta-linkages in the backbone of lambda-carrageenan, resulting in the tetrasaccharide alpha-D-Galp2,6S2-(1-&gt;3)-beta-D-Galp2S-(1-&gt;4)-alpha-D-Galp2,6S2-(1-&gt;3)-D-Galp2S.. Functionally, hydrolyzes lambda-carrageenan with inversion of anomeric configuration. Does not hydrolyze iota- and kappa-carrageenans, agarose or porphyran. The polypeptide is Lambda-carrageenase (Pseudoalteromonas sp).